A 428-amino-acid polypeptide reads, in one-letter code: Cytochrome c biogenesis protein CcsB (428 aa).

Helical transmembrane passes span 14–34 (LRFA…GTFI), 72–92 (SIWF…CSFR), and 162–182 (IGPL…AYGS).

Belongs to the Ccs1/CcsB family. As to quaternary structure, may interact with CcsA.

Its subcellular location is the cellular thylakoid membrane. In terms of biological role, required during biogenesis of c-type cytochromes (cytochrome c6 and cytochrome f) at the step of heme attachment. This is Cytochrome c biogenesis protein CcsB from Prochlorococcus marinus (strain MIT 9312).